A 289-amino-acid chain; its full sequence is ATP phosphoribosyltransferase (289 aa).

The protein belongs to the ATP phosphoribosyltransferase family. Long subfamily. Mg(2+) is required as a cofactor.

Its subcellular location is the cytoplasm. It carries out the reaction 1-(5-phospho-beta-D-ribosyl)-ATP + diphosphate = 5-phospho-alpha-D-ribose 1-diphosphate + ATP. It participates in amino-acid biosynthesis; L-histidine biosynthesis; L-histidine from 5-phospho-alpha-D-ribose 1-diphosphate: step 1/9. With respect to regulation, feedback inhibited by histidine. Functionally, catalyzes the condensation of ATP and 5-phosphoribose 1-diphosphate to form N'-(5'-phosphoribosyl)-ATP (PR-ATP). Has a crucial role in the pathway because the rate of histidine biosynthesis seems to be controlled primarily by regulation of HisG enzymatic activity. This is ATP phosphoribosyltransferase from Methanosarcina mazei (strain ATCC BAA-159 / DSM 3647 / Goe1 / Go1 / JCM 11833 / OCM 88) (Methanosarcina frisia).